An 81-amino-acid chain; its full sequence is Protein Vpu (81 aa).

Over 1-7 the chain is Extracellular; the sequence is MQPLQIL. The helical transmembrane segment at 8-28 threads the bilayer; the sequence is AIVALVVAAIIAIVVWTIVYI. Residues 29-81 lie on the Cytoplasmic side of the membrane; sequence EYRKILRQRKIDRLIDRITERAEDSGNESEGDQEELSALVERGHLAPWDVDDL. The disordered stretch occupies residues 50-81; the sequence is AEDSGNESEGDQEELSALVERGHLAPWDVDDL. A phosphoserine; by host CK2 mark is found at Ser53 and Ser57. Over residues 53 to 63 the composition is skewed to acidic residues; the sequence is SGNESEGDQEE.

This sequence belongs to the HIV-1 VPU protein family. Homopentamer. Interacts with host CD4 and BRTC; these interactions induce proteasomal degradation of CD4. Interacts with host BST2; this interaction leads to the degradation of host BST2. Interacts with host FBXW11. Interacts with host AP1M1; this interaction plays a role in the mistrafficking and subsequent degradation of host BST2. Interacts with host RANBP2; this interaction allows Vpu to down-regulate host BLM sumoylation. Post-translationally, phosphorylated by host CK2. This phosphorylation is necessary for interaction with human BTRC and degradation of CD4.

The protein localises to the host membrane. Its activity is regulated as follows. Ion channel activity is inhibited by hexamethylene amiloride in vitro. In terms of biological role, enhances virion budding by targeting host CD4 and Tetherin/BST2 to proteasome degradation. Degradation of CD4 prevents any unwanted premature interactions between viral Env and its host receptor CD4 in the endoplasmic reticulum. Degradation of antiretroviral protein Tetherin/BST2 is important for virion budding, as BST2 tethers new viral particles to the host cell membrane. Mechanistically, Vpu bridges either CD4 or BST2 to BTRC, a substrate recognition subunit of the Skp1/Cullin/F-box protein E3 ubiquitin ligase, induces their ubiquitination and subsequent proteasomal degradation. The alteration of the E3 ligase specificity by Vpu seems to promote the degradation of host IKBKB, leading to NF-kappa-B down-regulation and subsequent apoptosis. Acts as a viroporin that forms an oligomeric ion channel in membranes. Modulates the host DNA repair mechanisms to promote degradation of nuclear viral cDNA in cells that are already productively infected in order to suppress immune sensing and proviral hyper-integration (superinfection). Manipulates PML-NBs and modulates SUMOylation of host BLM protein thereby enhancing its DNA-end processing activity toward viral unintegrated linear DNA. Also inhibits RAD52-mediated homologous repair of viral cDNA, preventing the generation of dead-end circular forms of single copies of the long terminal repeat and permitting sustained nucleolytic attack. The protein is Protein Vpu of Human immunodeficiency virus type 1 group M subtype B (isolate SF162) (HIV-1).